Reading from the N-terminus, the 75-residue chain is Acyl carrier protein (75 aa).

Residues 1-74 (MLDKVKEIIV…DVINYIEANK (74 aa)) enclose the Carrier domain. Serine 34 carries the post-translational modification O-(pantetheine 4'-phosphoryl)serine.

The protein belongs to the acyl carrier protein (ACP) family. Post-translationally, 4'-phosphopantetheine is transferred from CoA to a specific serine of apo-ACP by AcpS. This modification is essential for activity because fatty acids are bound in thioester linkage to the sulfhydryl of the prosthetic group.

Its subcellular location is the cytoplasm. It participates in lipid metabolism; fatty acid biosynthesis. In terms of biological role, carrier of the growing fatty acid chain in fatty acid biosynthesis. In Fusobacterium nucleatum subsp. nucleatum (strain ATCC 25586 / DSM 15643 / BCRC 10681 / CIP 101130 / JCM 8532 / KCTC 2640 / LMG 13131 / VPI 4355), this protein is Acyl carrier protein.